Reading from the N-terminus, the 269-residue chain is Small ribosomal subunit protein eS1 (269 aa).

The tract at residues 1–20 is disordered; that stretch reads MAVGKNKGVSKGGKKGSKKK.

Belongs to the eukaryotic ribosomal protein eS1 family. In terms of assembly, component of the small ribosomal subunit. Mature ribosomes consist of a small (40S) and a large (60S) subunit. The 40S subunit contains about 33 different proteins and 1 molecule of RNA (18S). The 60S subunit contains about 49 different proteins and 3 molecules of RNA (28S, 5.8S and 5S).

It is found in the cytoplasm. Has an essential role in oogenesis. The protein is Small ribosomal subunit protein eS1 of Anopheles gambiae (African malaria mosquito).